The primary structure comprises 99 residues: Aspartyl/glutamyl-tRNA(Asn/Gln) amidotransferase subunit C (99 aa).

This sequence belongs to the GatC family. As to quaternary structure, heterotrimer of A, B and C subunits.

It catalyses the reaction L-glutamyl-tRNA(Gln) + L-glutamine + ATP + H2O = L-glutaminyl-tRNA(Gln) + L-glutamate + ADP + phosphate + H(+). The catalysed reaction is L-aspartyl-tRNA(Asn) + L-glutamine + ATP + H2O = L-asparaginyl-tRNA(Asn) + L-glutamate + ADP + phosphate + 2 H(+). Its function is as follows. Allows the formation of correctly charged Asn-tRNA(Asn) or Gln-tRNA(Gln) through the transamidation of misacylated Asp-tRNA(Asn) or Glu-tRNA(Gln) in organisms which lack either or both of asparaginyl-tRNA or glutaminyl-tRNA synthetases. The reaction takes place in the presence of glutamine and ATP through an activated phospho-Asp-tRNA(Asn) or phospho-Glu-tRNA(Gln). This Paraburkholderia phytofirmans (strain DSM 17436 / LMG 22146 / PsJN) (Burkholderia phytofirmans) protein is Aspartyl/glutamyl-tRNA(Asn/Gln) amidotransferase subunit C.